Consider the following 694-residue polypeptide: Cyclic nucleotide-gated channel beta-3 (694 aa).

Over 1–210 the chain is Cytoplasmic; that stretch reads MLKSLTVKFN…SIDSYTDRVY (210 aa). Disordered regions lie at residues 24–82 and 146–177; these read CPNL…DPEC and ENFPEVEASSQTAMSTNISPKQENNSKLKEHQ. Composition is skewed to polar residues over residues 26–40 and 153–168; these read NLSSLSQPTIAQGDN and ASSQTAMSTNISPKQE. The chain crosses the membrane as a helical span at residues 211–234; sequence LLWLLLVTIAYNWNCWLLPVRLVF. The Extracellular portion of the chain corresponds to 235–241; that stretch reads PCQTPDN. Residues 242 to 262 form a helical membrane-spanning segment; it reads KNYWIITDIVCDIIYLCDILL. The Cytoplasmic portion of the chain corresponds to 263 to 291; that stretch reads IQPRLQFVRGGEIIVDSNELKRNYRSSTK. The chain crosses the membrane as a helical span at residues 292 to 309; that stretch reads FRMDVASLLPFEVLYIFF. Topologically, residues 310-312 are extracellular; the sequence is GVN. The chain crosses the membrane as a helical span at residues 313-327; the sequence is PIFRANRILKYTSFF. The Cytoplasmic portion of the chain corresponds to 328–340; the sequence is EFNHHLESIMDKA. An ion conduction pathway region spans residues 340–439; that stretch reads AYVYRVIRTT…IGQMRDVIGA (100 aa). A helical membrane pass occupies residues 341–363; that stretch reads YVYRVIRTTGYLLFLLHINACVY. Over 364–385 the chain is Extracellular; sequence YWASDYEGIGSTKWVYNGEGNK. The next 2 helical transmembrane spans lie at 386–412 and 413–437; these read YLRCFYWAVRTLITIGGLPEPQTSFEI and VFQFLNFFSGVFVFSSLIGQMRDVI. A selectivity filter region spans residues 399–402; that stretch reads TIGG. Residues 438–694 are Cytoplasmic-facing; it reads GAATANQNYF…KGKRKTTTQK (257 aa). Positions 442–518 are C-linker; the sequence is ANQNYFQACM…SIIDKVELFK (77 aa). The interval 522–638 is cyclic nucleotide-binding domain; that stretch reads TQMIYDLLLR…LLMKKAKILL (117 aa). 3',5'-cyclic GMP is bound by residues G583, E584, R596, and T597.

Belongs to the cyclic nucleotide-gated cation channel (TC 1.A.1.5) family. CNGB3 subfamily. Forms heterotetrameric channels composed of CNGA3 and CNGB3 subunits with 3:1 stoichiometry. Small subset of retinal photoreceptor cells and testis.

It localises to the cell membrane. It carries out the reaction Ca(2+)(in) = Ca(2+)(out). The catalysed reaction is Na(+)(in) = Na(+)(out). It catalyses the reaction K(+)(in) = K(+)(out). The enzyme catalyses NH4(+)(in) = NH4(+)(out). It carries out the reaction Rb(+)(in) = Rb(+)(out). The catalysed reaction is Li(+)(in) = Li(+)(out). It catalyses the reaction Cs(+)(in) = Cs(+)(out). Pore-forming subunit of the cone cyclic nucleotide-gated channel. Mediates cone photoresponses at bright light converting transient changes in intracellular cGMP levels into electrical signals. In the dark, cGMP levels are high and keep the channel open enabling a steady inward current carried by Na(+) and Ca(2+) ions that leads to membrane depolarization and neurotransmitter release from synaptic terminals. Upon photon absorption cGMP levels decline leading to channel closure and membrane hyperpolarization that ultimately slows neurotransmitter release and signals the presence of light, the end point of the phototransduction cascade. Conducts cGMP- and cAMP-gated ion currents, with permeability for monovalent and divalent cations. The chain is Cyclic nucleotide-gated channel beta-3 from Mus musculus (Mouse).